We begin with the raw amino-acid sequence, 183 residues long: Potassium-transporting ATPase KdpC subunit (183 aa).

The chain crosses the membrane as a helical span at residues 10–30 (LTVFTLILFAVIYPLAIYGIA).

This sequence belongs to the KdpC family. In terms of assembly, the system is composed of three essential subunits: KdpA, KdpB and KdpC.

It is found in the cell inner membrane. Part of the high-affinity ATP-driven potassium transport (or Kdp) system, which catalyzes the hydrolysis of ATP coupled with the electrogenic transport of potassium into the cytoplasm. This subunit acts as a catalytic chaperone that increases the ATP-binding affinity of the ATP-hydrolyzing subunit KdpB by the formation of a transient KdpB/KdpC/ATP ternary complex. This chain is Potassium-transporting ATPase KdpC subunit, found in Flavobacterium johnsoniae (strain ATCC 17061 / DSM 2064 / JCM 8514 / BCRC 14874 / CCUG 350202 / NBRC 14942 / NCIMB 11054 / UW101) (Cytophaga johnsonae).